Consider the following 426-residue polypeptide: L-cysteine:1D-myo-inositol 2-amino-2-deoxy-alpha-D-glucopyranoside ligase (426 aa).

A Zn(2+)-binding site is contributed by Cys-45. Residues 45-48 (CGIT), Thr-60, and 83-85 (NVT) each bind L-cysteinyl-5'-AMP. A 'HIGH' region motif is present at residues 47 to 57 (ITPYDATHIGH). The 'ERGGDP' region motif lies at 199-204 (ERGGDP). Position 239 (Trp-239) interacts with L-cysteinyl-5'-AMP. Cys-243 serves as a coordination point for Zn(2+). Residue 261 to 263 (GSD) coordinates L-cysteinyl-5'-AMP. His-268 provides a ligand contact to Zn(2+). Position 294 (Val-294) interacts with L-cysteinyl-5'-AMP. The 'KMSKS' region motif lies at 300–304 (KMSKS).

The protein belongs to the class-I aminoacyl-tRNA synthetase family. MshC subfamily. Monomer. Zn(2+) serves as cofactor.

It carries out the reaction 1D-myo-inositol 2-amino-2-deoxy-alpha-D-glucopyranoside + L-cysteine + ATP = 1D-myo-inositol 2-(L-cysteinylamino)-2-deoxy-alpha-D-glucopyranoside + AMP + diphosphate + H(+). Catalyzes the ATP-dependent condensation of GlcN-Ins and L-cysteine to form L-Cys-GlcN-Ins. This Clavibacter michiganensis subsp. michiganensis (strain NCPPB 382) protein is L-cysteine:1D-myo-inositol 2-amino-2-deoxy-alpha-D-glucopyranoside ligase.